The primary structure comprises 85 residues: Large ribosomal subunit protein bL27 (85 aa).

Positions Met-1–Gly-22 are disordered.

It belongs to the bacterial ribosomal protein bL27 family.

The polypeptide is Large ribosomal subunit protein bL27 (Vibrio vulnificus (strain CMCP6)).